The primary structure comprises 361 residues: Phospho-N-acetylmuramoyl-pentapeptide-transferase (361 aa).

The next 10 membrane-spanning stretches (helical) occupy residues 27 to 47, 72 to 92, 99 to 119, 139 to 159, 169 to 189, 200 to 220, 240 to 260, 264 to 284, 289 to 309, and 338 to 358; these read GALF…ISLL, TPTM…FLWA, VWIT…DDYL, ALIA…GLAY, AIVN…VGAG, GLAI…AYLV, LAVV…FNAP, IFMG…VAVA, IVLA…IIQV, and QVVI…LATL.

The protein belongs to the glycosyltransferase 4 family. MraY subfamily. Mg(2+) serves as cofactor.

The protein resides in the cell inner membrane. It carries out the reaction UDP-N-acetyl-alpha-D-muramoyl-L-alanyl-gamma-D-glutamyl-meso-2,6-diaminopimeloyl-D-alanyl-D-alanine + di-trans,octa-cis-undecaprenyl phosphate = di-trans,octa-cis-undecaprenyl diphospho-N-acetyl-alpha-D-muramoyl-L-alanyl-D-glutamyl-meso-2,6-diaminopimeloyl-D-alanyl-D-alanine + UMP. Its pathway is cell wall biogenesis; peptidoglycan biosynthesis. In terms of biological role, catalyzes the initial step of the lipid cycle reactions in the biosynthesis of the cell wall peptidoglycan: transfers peptidoglycan precursor phospho-MurNAc-pentapeptide from UDP-MurNAc-pentapeptide onto the lipid carrier undecaprenyl phosphate, yielding undecaprenyl-pyrophosphoryl-MurNAc-pentapeptide, known as lipid I. The polypeptide is Phospho-N-acetylmuramoyl-pentapeptide-transferase (Methylobacterium sp. (strain 4-46)).